The sequence spans 20 residues: Cuticle-degrading protease-like protein (20 aa).

The disordered stretch occupies residues 1-20 (AIVEQQGAPXGLGRIINKXK).

Belongs to the peptidase S8 family.

It is found in the secreted. Functionally, capable of breaching the insect cuticle. The protein is Cuticle-degrading protease-like protein of Metacordyceps chlamydosporia (Nematophagous fungus).